The sequence spans 285 residues: Small ribosomal subunit biogenesis GTPase RsgA (285 aa).

A CP-type G domain is found at 56–217 (DNLLIRPIVA…IIDTPGFSSI (162 aa)). Residues 105-108 (NKID) and 159-167 (GPSGVGKSS) contribute to the GTP site. The Zn(2+) site is built by Cys241, Cys246, His248, and Cys254.

It belongs to the TRAFAC class YlqF/YawG GTPase family. RsgA subfamily. Monomer. Associates with 30S ribosomal subunit, binds 16S rRNA. Requires Zn(2+) as cofactor.

The protein resides in the cytoplasm. In terms of biological role, one of several proteins that assist in the late maturation steps of the functional core of the 30S ribosomal subunit. Helps release RbfA from mature subunits. May play a role in the assembly of ribosomal proteins into the subunit. Circularly permuted GTPase that catalyzes slow GTP hydrolysis, GTPase activity is stimulated by the 30S ribosomal subunit. The polypeptide is Small ribosomal subunit biogenesis GTPase RsgA (Fusobacterium nucleatum subsp. nucleatum (strain ATCC 25586 / DSM 15643 / BCRC 10681 / CIP 101130 / JCM 8532 / KCTC 2640 / LMG 13131 / VPI 4355)).